The chain runs to 520 residues: Genome polyprotein (520 aa).

The residue at position 2 (S2) is an N-acetylserine; by host. The interval 2–23 is interaction with STAT1; that stretch reads STNPKPQRKTKRNTNRRPQDVK. The tract at residues 2–58 is interaction with EIF2AK2/PKR; it reads STNPKPQRKTKRNTNRRPQDVKFPGGGQIVGGVYLLTRRGPRLGVRATRKTSERSQP. Residues 2–59 form an interaction with DDX3X region; the sequence is STNPKPQRKTKRNTNRRPQDVKFPGGGQIVGGVYLLTRRGPRLGVRATRKTSERSQPR. Positions 2–75 are disordered; sequence STNPKPQRKT…PKARRPEGRA (74 aa). Residues 2-168 are Cytoplasmic-facing; that stretch reads STNPKPQRKT…EDGVNYATGN (167 aa). Short sequence motifs (nuclear localization signal) lie at residues 5-13 and 38-43; these read PKPQRKTKR and TRRGPR. Residues 7-16 are compositionally biased toward basic residues; sequence PQRKTKRNTN. S53 bears the Phosphoserine; by host mark. 2 consecutive short sequence motifs (nuclear localization signal) follow at residues 58 to 64 and 66 to 71; these read PRGRRQP and PKARRP. Positions 58-68 are enriched in basic residues; that stretch reads PRGRRQPIPKA. Phosphoserine; by host is present on S99. Residues 112–152 are important for endoplasmic reticulum and mitochondrial localization; it reads PRRRSRNLGKVIDTLTCGFADLMGYIPLVGAPLGGASRALA. The residue at position 116 (S116) is a Phosphoserine; by host PKA. Residues 122–173 form an interaction with APOA2 region; it reads VIDTLTCGFADLMGYIPLVGAPLGGASRALAHGVRVLEDGVNYATGNLPGCS. Positions 164–167 are important for lipid droplets localization; the sequence is YATG. A helical membrane pass occupies residues 169–189; that stretch reads LPGCSFSIFLSALMSCLTTPA. Positions 178–191 are cleaved as a propeptide — ER anchor for the core protein, removed in mature form by host signal peptidase; the sequence is LSALMSCLTTPASA. The Lumenal segment spans residues 190–358; the sequence is SAYEVRNVSG…AGAHWGVLAG (169 aa). Residues N196, N209, N234, and N250 are each glycosylated (N-linked (GlcNAc...) asparagine; by host). The tract at residues 265 to 296 is important for fusion; it reads LVGAATLCSAMYVGDLCGSVFLVSQLFTFSPR. N305 is a glycosylation site (N-linked (GlcNAc...) asparagine; by host). The helical transmembrane segment at 359–379 threads the bilayer; sequence LAYYSMVGNWAKVLIVMLLFA. Over 380 to 520 the chain is Lumenal; the sequence is GVDGANTHTV…TPSPVVVGTT (141 aa). The tract at residues 385 to 411 is HVR1; the sequence is NTHTVGGTEGFATQRLTSLFALGPSQK. N-linked (GlcNAc...) asparagine; by host glycosylation occurs at N418. N-linked (GlcNAc...) (high mannose) asparagine; by host glycosylation is found at N424, N431, and N449. The cysteines at positions 453 and 460 are disulfide-linked. An HVR2 region spans residues 474–479; it reads TYAEPS. Residues 480–493 form a CD81-binding 1 region; sequence ISEQRPYCWHYAPR. Intrachain disulfides connect C487/C495 and C504/C509.

Belongs to the hepacivirus polyprotein family. Homooligomer. Interacts with E1 (via C-terminus). Interacts with the non-structural protein 5A. Interacts (via N-terminus) with host STAT1 (via SH2 domain); this interaction results in decreased STAT1 phosphorylation and ubiquitin-mediated proteasome-dependent STAT1 degradation, leading to decreased IFN-stimulated gene transcription. Interacts with host STAT3; this interaction constitutively activates STAT3. Interacts with host LTBR receptor. Interacts with host TNFRSF1A receptor and possibly induces apoptosis. Interacts with host HNRPK. Interacts with host YWHAE. Interacts with host UBE3A/E6AP. Interacts with host DDX3X. Interacts with host APOA2. Interacts with host RXRA protein. Interacts with host SP110 isoform 3/Sp110b; this interaction sequesters the transcriptional corepressor SP110 away from the nucleus. Interacts with host CREB3 nuclear transcription protein; this interaction triggers cell transformation. Interacts with host ACY3. Interacts with host C1QR1. Interacts with host RBM24; this interaction, which enhances the interaction of the mature core protein with 5'-UTR, may inhibit viral translation and favor replication. Interacts with host EIF2AK2/PKR; this interaction induces the autophosphorylation of EIF2AK2. Part of the viral assembly initiation complex composed of NS2, E1, E2, NS3, NS4A, NS5A and the mature core protein. As to quaternary structure, forms a heterodimer with envelope glycoprotein E2. Interacts with mature core protein. Interacts with protease NS2. The heterodimer E1/E2 interacts with host CLDN1; this interaction plays a role in viral entry into host cell. Interacts with host SPSB2 (via C-terminus). Part of the viral assembly initiation complex composed of NS2, E1, E2, NS3, NS4A, NS5A and the mature core protein. In terms of assembly, forms a heterodimer with envelope glycoprotein E1. Interacts with host CD81 and SCARB1 receptors; these interactions play a role in viral entry into host cell. Interacts with host EIF2AK2/PKR; this interaction inhibits EIF2AK2 and probably allows the virus to evade the innate immune response. Interacts with host CD209/DC-SIGN and CLEC4M/DC-SIGNR. Interact with host SPCS1; this interaction is essential for viral particle assembly. Interacts with protease NS2. The heterodimer E1/E2 interacts with host CLDN1; this interaction plays a role in viral entry into host cell. Part of the viral assembly initiation complex composed of NS2, E1, E2, NS3, NS4A, NS5A and the mature core protein. In terms of processing, specific enzymatic cleavages in vivo yield mature proteins. The structural proteins, core, E1, E2 and p7 are produced by proteolytic processing by host signal peptidases. The core protein precursor is synthesized as a 23 kDa, which is retained in the ER membrane through the hydrophobic signal peptide. Cleavage by the signal peptidase releases the 21 kDa mature core protein. The cleavage of the core protein precursor occurs between aminoacids 176 and 188 but the exact cleavage site is not known. Some degraded forms of the core protein appear as well during the course of infection. The other proteins (p7, NS2, NS3, NS4A, NS4B, NS5A and NS5B) are cleaved by the viral proteases. Autoprocessing between NS2 and NS3 is mediated by the NS2 cysteine protease catalytic domain and regulated by the NS3 N-terminal domain. Post-translationally, phosphorylated by host PKC and PKA. Ubiquitinated; mediated by UBE3A and leading to core protein subsequent proteasomal degradation. In terms of processing, highly N-glycosylated.

The protein localises to the host endoplasmic reticulum membrane. It localises to the host mitochondrion membrane. Its subcellular location is the virion. The protein resides in the host cytoplasm. It is found in the host nucleus. The protein localises to the host lipid droplet. It localises to the virion membrane. Packages viral RNA to form a viral nucleocapsid, and promotes virion budding. Participates in the viral particle production as a result of its interaction with the non-structural protein 5A. Binds RNA and may function as a RNA chaperone to induce the RNA structural rearrangements taking place during virus replication. Modulates viral translation initiation by interacting with viral IRES and 40S ribosomal subunit. Affects various cell signaling pathways, host immunity and lipid metabolism. Prevents the establishment of cellular antiviral state by blocking the interferon-alpha/beta (IFN-alpha/beta) and IFN-gamma signaling pathways and by blocking the formation of phosphorylated STAT1 and promoting ubiquitin-mediated proteasome-dependent degradation of STAT1. Activates STAT3 leading to cellular transformation. Regulates the activity of cellular genes, including c-myc and c-fos. May repress the promoter of p53, and sequester CREB3 and SP110 isoform 3/Sp110b in the cytoplasm. Represses cell cycle negative regulating factor CDKN1A, thereby interrupting an important check point of normal cell cycle regulation. Targets transcription factors involved in the regulation of inflammatory responses and in the immune response: suppresses TNF-induced NF-kappa-B activation, and activates AP-1. Binds to dendritic cells (DCs) via C1QR1, resulting in down-regulation of T-lymphocytes proliferation. Alters lipid metabolism by interacting with hepatocellular proteins involved in lipid accumulation and storage. Induces up-regulation of FAS promoter activity, and thereby contributes to the increased triglyceride accumulation in hepatocytes (steatosis). In terms of biological role, forms a heterodimer with envelope glycoprotein E2, which mediates virus attachment to the host cell, virion internalization through clathrin-dependent endocytosis and fusion with host membrane. Fusion with the host cell is most likely mediated by both E1 and E2, through conformational rearrangements of the heterodimer required for fusion rather than a classical class II fusion mechanism. E1/E2 heterodimer binds host apolipoproteins such as APOB and ApoE thereby forming a lipo-viro-particle (LVP). APOE associated to the LVP allows the initial virus attachment to cell surface receptors such as the heparan sulfate proteoglycans (HSPGs), syndecan-1 (SDC1), syndecan-1 (SDC2), the low-density lipoprotein receptor (LDLR) and scavenger receptor class B type I (SCARB1). The cholesterol transfer activity of SCARB1 allows E2 exposure and binding of E2 to SCARB1 and the tetraspanin CD81. E1/E2 heterodimer binding on CD81 activates the epithelial growth factor receptor (EGFR) signaling pathway. Diffusion of the complex E1-E2-EGFR-SCARB1-CD81 to the cell lateral membrane allows further interaction with Claudin 1 (CLDN1) and occludin (OCLN) to finally trigger HCV entry. Its function is as follows. Forms a heterodimer with envelope glycoprotein E1, which mediates virus attachment to the host cell, virion internalization through clathrin-dependent endocytosis and fusion with host membrane. Fusion with the host cell is most likely mediated by both E1 and E2, through conformational rearrangements of the heterodimer required for fusion rather than a classical class II fusion mechanism. The interaction between envelope glycoprotein E2 and host apolipoprotein E/APOE allows the proper assembly, maturation and infectivity of the viral particles. This interaction is probably promoted via the up-regulation of cellular autophagy by the virus. E1/E2 heterodimer binds host apolipoproteins such as APOB and APOE thereby forming a lipo-viro-particle (LVP). APOE associated to the LVP allows the initial virus attachment to cell surface receptors such as the heparan sulfate proteoglycans (HSPGs), syndecan-1 (SDC1), syndecan-1 (SDC2), the low-density lipoprotein receptor (LDLR) and scavenger receptor class B type I (SCARB1). The cholesterol transfer activity of SCARB1 allows E2 exposure and binding of E2 to SCARB1 and the tetraspanin CD81. E1/E2 heterodimer binding on CD81 activates the epithelial growth factor receptor (EGFR) signaling pathway. Diffusion of the complex E1-E2-EGFR-SCARB1-CD81 to the cell lateral membrane allows further interaction with Claudin 1 (CLDN1) and occludin (OCLN) to finally trigger HCV entry. Inhibits host EIF2AK2/PKR activation, preventing the establishment of an antiviral state. Viral ligand for CD209/DC-SIGN and CLEC4M/DC-SIGNR, which are respectively found on dendritic cells (DCs), and on liver sinusoidal endothelial cells and macrophage-like cells of lymph node sinuses. These interactions allow the capture of circulating HCV particles by these cells and subsequent facilitated transmission to permissive cells such as hepatocytes and lymphocyte subpopulations. The polypeptide is Genome polyprotein (Hepatitis C virus (isolate HCV-KF) (HCV)).